Here is a 127-residue protein sequence, read N- to C-terminus: Small ribosomal subunit protein uS11 (127 aa).

The protein belongs to the universal ribosomal protein uS11 family. As to quaternary structure, part of the 30S ribosomal subunit. Interacts with proteins S7 and S18. Binds to IF-3.

Functionally, located on the platform of the 30S subunit, it bridges several disparate RNA helices of the 16S rRNA. Forms part of the Shine-Dalgarno cleft in the 70S ribosome. The protein is Small ribosomal subunit protein uS11 of Lactococcus lactis subsp. lactis (strain IL1403) (Streptococcus lactis).